The following is a 138-amino-acid chain: Large ribosomal subunit protein uL16 (138 aa).

Positions 1–21 are enriched in basic residues; sequence MLIPRKVKHRKQHHPSLRGRA. The segment at 1 to 22 is disordered; sequence MLIPRKVKHRKQHHPSLRGRAK.

This sequence belongs to the universal ribosomal protein uL16 family. Part of the 50S ribosomal subunit.

Its function is as follows. Binds 23S rRNA and is also seen to make contacts with the A and possibly P site tRNAs. This Thermobifida fusca (strain YX) protein is Large ribosomal subunit protein uL16.